The following is a 529-amino-acid chain: uncharacterized protein (529 aa).

ATP is bound by residues 178 to 186 (TSGTTGQPK), aspartate 401, arginine 416, and lysine 510.

It belongs to the ATP-dependent AMP-binding enzyme family.

This is an uncharacterized protein from Bacillus subtilis (strain 168).